A 370-amino-acid chain; its full sequence is Histidinol-phosphate aminotransferase 2 (370 aa).

Residue lysine 230 is modified to N6-(pyridoxal phosphate)lysine.

This sequence belongs to the class-II pyridoxal-phosphate-dependent aminotransferase family. Histidinol-phosphate aminotransferase subfamily. Homodimer. Pyridoxal 5'-phosphate serves as cofactor.

The enzyme catalyses L-histidinol phosphate + 2-oxoglutarate = 3-(imidazol-4-yl)-2-oxopropyl phosphate + L-glutamate. It participates in amino-acid biosynthesis; L-histidine biosynthesis; L-histidine from 5-phospho-alpha-D-ribose 1-diphosphate: step 7/9. In Pseudomonas fluorescens (strain Pf0-1), this protein is Histidinol-phosphate aminotransferase 2.